Reading from the N-terminus, the 308-residue chain is Protein doublecortin (308 aa).

Residues 21–104 form the Doublecortin 1 domain; the sequence is ARVILFRNGD…AEPLNTEVIP (84 aa). Positions 115 to 167 are disordered; it reads EVSDQDDEPKPSKPFVSSVPPPPTPTPTSSSGTTTTSQPTLSASPSVSSAQSP. Low complexity predominate over residues 141 to 167; it reads PTSSSGTTTTSQPTLSASPSVSSAQSP. The 84-residue stretch at 194–277 folds into the Doublecortin 2 domain; the sequence is KVIMCFRNGD…GETLNPLDFS (84 aa). The interval 282–308 is disordered; the sequence is EHVKQKKLQEQQQQASEQQKPQEQEIF. Residues 291–300 are compositionally biased toward low complexity; it reads EQQQQASEQQ.

As to quaternary structure, interacts with lis1.

The protein localises to the cytoplasm. The protein resides in the cytoskeleton. Functionally, has a cytoskeleton-independent function in chemotactic signaling during development. The sequence is that of Protein doublecortin (dcx) from Dictyostelium discoideum (Social amoeba).